A 39-amino-acid chain; its full sequence is MTPSLANFLWSLVLGAAIVLIPATIGLIFISQYDKIKRT.

Residues 10–30 traverse the membrane as a helical segment; sequence WSLVLGAAIVLIPATIGLIFI.

This sequence belongs to the PsbX family. Type 1 subfamily. PSII is composed of 1 copy each of membrane proteins PsbA, PsbB, PsbC, PsbD, PsbE, PsbF, PsbH, PsbI, PsbJ, PsbK, PsbL, PsbM, PsbT, PsbX, PsbY, PsbZ, Psb30/Ycf12, peripheral proteins PsbO, CyanoQ (PsbQ), PsbU, PsbV and a large number of cofactors. It forms dimeric complexes.

It localises to the cellular thylakoid membrane. Functionally, involved in the binding and/or turnover of quinones at the Q(B) site of photosystem II (PSII). PSII is a light-driven water plastoquinone oxidoreductase, using light energy to abstract electrons from H(2)O, generating a proton gradient subsequently used for ATP formation. The sequence is that of Photosystem II reaction center protein X from Microcystis aeruginosa (strain NIES-843 / IAM M-2473).